The chain runs to 321 residues: Phosphatidate cytidylyltransferase, mitochondrial (321 aa).

The protein belongs to the TAM41 family. It depends on Mg(2+) as a cofactor. Co(2+) serves as cofactor. The cofactor is Cu(2+).

It is found in the mitochondrion inner membrane. It catalyses the reaction a 1,2-diacyl-sn-glycero-3-phosphate + CTP + H(+) = a CDP-1,2-diacyl-sn-glycerol + diphosphate. It participates in phospholipid metabolism; CDP-diacylglycerol biosynthesis; CDP-diacylglycerol from sn-glycerol 3-phosphate: step 3/3. Its function is as follows. Catalyzes the formation of CDP-diacylglycerol (CDP-DAG) from phosphatidic acid (PA) in the mitochondrial inner membrane. Required for the biosynthesis of the dimeric phospholipid cardiolipin, which stabilizes supercomplexes of the mitochondrial respiratory chain in the mitochondrial inner membrane. The polypeptide is Phosphatidate cytidylyltransferase, mitochondrial (Caenorhabditis briggsae).